The sequence spans 277 residues: Large ribosomal subunit protein uL2 (277 aa).

A disordered region spans residues methionine 225–arginine 277. The span at lysine 254 to histidine 264 shows a compositional bias: basic residues.

Belongs to the universal ribosomal protein uL2 family. Part of the 50S ribosomal subunit. Forms a bridge to the 30S subunit in the 70S ribosome.

In terms of biological role, one of the primary rRNA binding proteins. Required for association of the 30S and 50S subunits to form the 70S ribosome, for tRNA binding and peptide bond formation. It has been suggested to have peptidyltransferase activity; this is somewhat controversial. Makes several contacts with the 16S rRNA in the 70S ribosome. In Anaplasma marginale (strain Florida), this protein is Large ribosomal subunit protein uL2.